We begin with the raw amino-acid sequence, 98 residues long: Aspartyl/glutamyl-tRNA(Asn/Gln) amidotransferase subunit C (98 aa).

This sequence belongs to the GatC family. Heterotrimer of A, B and C subunits.

The enzyme catalyses L-glutamyl-tRNA(Gln) + L-glutamine + ATP + H2O = L-glutaminyl-tRNA(Gln) + L-glutamate + ADP + phosphate + H(+). The catalysed reaction is L-aspartyl-tRNA(Asn) + L-glutamine + ATP + H2O = L-asparaginyl-tRNA(Asn) + L-glutamate + ADP + phosphate + 2 H(+). Allows the formation of correctly charged Asn-tRNA(Asn) or Gln-tRNA(Gln) through the transamidation of misacylated Asp-tRNA(Asn) or Glu-tRNA(Gln) in organisms which lack either or both of asparaginyl-tRNA or glutaminyl-tRNA synthetases. The reaction takes place in the presence of glutamine and ATP through an activated phospho-Asp-tRNA(Asn) or phospho-Glu-tRNA(Gln). In Microcystis aeruginosa (strain NIES-843 / IAM M-2473), this protein is Aspartyl/glutamyl-tRNA(Asn/Gln) amidotransferase subunit C.